Reading from the N-terminus, the 84-residue chain is uncharacterized protein (84 aa).

This is an uncharacterized protein from Lepidoptera (butterflies and moths).